The primary structure comprises 185 residues: Ribosome-recycling factor (185 aa).

It belongs to the RRF family.

Its subcellular location is the cytoplasm. Functionally, responsible for the release of ribosomes from messenger RNA at the termination of protein biosynthesis. May increase the efficiency of translation by recycling ribosomes from one round of translation to another. The polypeptide is Ribosome-recycling factor (Xylella fastidiosa (strain Temecula1 / ATCC 700964)).